Here is a 223-residue protein sequence, read N- to C-terminus: Cytidylate kinase (223 aa).

An ATP-binding site is contributed by Gly10–Thr18.

It belongs to the cytidylate kinase family. Type 1 subfamily.

Its subcellular location is the cytoplasm. It carries out the reaction CMP + ATP = CDP + ADP. The catalysed reaction is dCMP + ATP = dCDP + ADP. The chain is Cytidylate kinase from Exiguobacterium sibiricum (strain DSM 17290 / CCUG 55495 / CIP 109462 / JCM 13490 / 255-15).